The chain runs to 905 residues: Probable aromatic-L-amino-acid decarboxylase (905 aa).

The segment at 250–296 (YLNPIIKTPPHNERVPKMKTNISKTRKKKGKVSDASKDSRPSETKKE) is disordered. Residues 280–296 (KVSDASKDSRPSETKKE) show a composition bias toward basic and acidic residues. Pyridoxal 5'-phosphate is bound by residues threonine 492 and serine 591. Lysine 648 bears the N6-(pyridoxal phosphate)lysine mark. Residues 861–905 (HTAEYADPPGKSNKSPQVAAKGELPSAAPPSSRTPNSDISEKSDR) are disordered. Residues 889–898 (PPSSRTPNSD) show a composition bias toward polar residues.

This sequence belongs to the group II decarboxylase family. In terms of assembly, homodimer. Requires pyridoxal 5'-phosphate as cofactor.

It catalyses the reaction L-dopa + H(+) = dopamine + CO2. It carries out the reaction 5-hydroxy-L-tryptophan + H(+) = serotonin + CO2. The protein operates within catecholamine biosynthesis; dopamine biosynthesis; dopamine from L-tyrosine: step 2/2. In terms of biological role, catalyzes the decarboxylation of L-3,4-dihydroxyphenylalanine (DOPA) to dopamine, L-5-hydroxytryptophan to serotonin and L-tryptophan to tryptamine. This chain is Probable aromatic-L-amino-acid decarboxylase (hdl-1), found in Caenorhabditis elegans.